Here is a 459-residue protein sequence, read N- to C-terminus: DnaJ homolog subfamily A member 1 homolog (459 aa).

Residues 6–73 (EYYERLGVKP…EKRKMYDSYG (68 aa)) form the J domain. A CR-type zinc finger spans residues 158 to 243 (GKLVKISISR…CKGKRVIQGK (86 aa)). Residues Cys-171, Cys-174, Cys-188, Cys-191, Cys-215, Cys-218, Cys-231, and Cys-234 each coordinate Zn(2+). 4 CXXCXGXG motif repeats span residues 171-178 (CKTCKGSG), 188-195 (CPTCNGSR), 215-222 (CHTCHGTG), and 231-238 (CKECKGKR). The tract at residues 405–459 (NTNEQSSHGGAGGAYQQHGGAYGHQKQQQQGFNPADFGAQFGGGGPQQAQQCQQQ) is disordered. Low complexity predominate over residues 418–435 (AYQQHGGAYGHQKQQQQG). Cys-456 carries the cysteine methyl ester modification. Cys-456 carries S-farnesyl cysteine lipidation. Positions 457–459 (QQQ) are cleaved as a propeptide — removed in mature form.

The protein localises to the membrane. Its subcellular location is the cytoplasm. It is found in the microsome. The protein resides in the mitochondrion. It localises to the nucleus. The protein localises to the perinuclear region. Its function is as follows. Co-chaperone for Hsp70 family members. Plays a role in protein transport into mitochondria and in the regulation of apoptosis via its role as co-chaperone. In Dictyostelium discoideum (Social amoeba), this protein is DnaJ homolog subfamily A member 1 homolog (dnaja1).